The primary structure comprises 202 residues: Eukaryotic translation initiation factor isoform 4E (202 aa).

The segment at 1-24 (MATEAPPPVDTTEVPPFTAAETAV) is disordered. MRNA is bound by residues 46–51 (QGAAWG), Lys-78, and 96–97 (WE). An intrachain disulfide couples Cys-101 to Cys-140. Residues 147-152 (RRSQDK) and 191-194 (KRER) contribute to the mRNA site.

This sequence belongs to the eukaryotic initiation factor 4E family. As to quaternary structure, EIF4F is a multi-subunit complex, the composition of which varies with external and internal environmental conditions. It is composed of at least EIF4A, EIF4E and EIF4G. EIF4E is also known to interact with other partners. In higher plants two isoforms of EIF4F have been identified, named isoform EIF4F and isoform EIF(iso)4F. Isoform EIF4F has subunits p220 and p26, whereas isoform EIF(iso)4F has subunits p82 and p28. (Microbial infection) Interacts with viral genome-linked protein (VPg); this interaction is possible in susceptible hosts but impaired in resistant plants. Post-translationally, according to the redox status, the Cys-101-Cys-140 disulfide bridge may have a role in regulating protein function by affecting its ability to bind capped mRNA.

Its subcellular location is the cytoplasm. It is found in the nucleus. Functionally, component of the protein complex eIF4F, which is involved in the recognition of the mRNA cap, ATP-dependent unwinding of 5'-terminal secondary structure and recruitment of mRNA to the ribosome. Recognizes and binds the 7-methylguanosine-containing mRNA cap during an early step in the initiation of protein synthesis and facilitates ribosome binding by inducing the unwinding of the mRNAs secondary structures. Key component of recessive resistance to potyviruses. (Microbial infection) Susceptibility host factor required for viral infection by recruiting viral RNAs to the host ribosomal complex via an interaction with viral genome-linked protein (VPg). The polypeptide is Eukaryotic translation initiation factor isoform 4E (Capsicum annuum (Capsicum pepper)).